We begin with the raw amino-acid sequence, 438 residues long: Thymidine phosphorylase (438 aa).

This sequence belongs to the thymidine/pyrimidine-nucleoside phosphorylase family. Homodimer.

The enzyme catalyses thymidine + phosphate = 2-deoxy-alpha-D-ribose 1-phosphate + thymine. The protein operates within pyrimidine metabolism; dTMP biosynthesis via salvage pathway; dTMP from thymine: step 1/2. In terms of biological role, the enzymes which catalyze the reversible phosphorolysis of pyrimidine nucleosides are involved in the degradation of these compounds and in their utilization as carbon and energy sources, or in the rescue of pyrimidine bases for nucleotide synthesis. The protein is Thymidine phosphorylase of Burkholderia cenocepacia (strain ATCC BAA-245 / DSM 16553 / LMG 16656 / NCTC 13227 / J2315 / CF5610) (Burkholderia cepacia (strain J2315)).